Reading from the N-terminus, the 183-residue chain is Putative lipoprotein LpqE (183 aa).

The signal sequence occupies residues 1–30 (MSRFKISLPALATRVAVLGFLTLMASVLGG). C31 carries the N-palmitoyl cysteine lipid modification. C31 carries S-diacylglycerol cysteine lipidation.

Its subcellular location is the cell membrane. The chain is Putative lipoprotein LpqE (lpqE) from Mycobacterium leprae (strain TN).